The following is a 1873-amino-acid chain: MSSPILNTDDNNCVRVALRVRPLSKKEEAERSMEVVKYVDGEPQVIMGDNNQTFTFDYVFNGKSRQQEIFDDCVANLVDCLFEGYNSTILAYGQTGSGKTFTMGTTSTIGIPTEELGVIPRVIDFIYDKIDRKKDTHQLVLKVSFLELYNEEIRDMLNPYPTAGGLPIREKSNGEVYIPGLVEQIVRSRQQMEEALIRGSQSRTTGSTLMNSHSSRSHAIFSIIVEQTPINSPVTSSSTSSTSTSSSSDDKKQSKGKKKKKSSSPDSLSPNKDDDSSIMIDEDEEDDEEDEDDDIMSMDERNPSIRSMFHFVDLAGSERVKKTKAEGQRLKEGININGGLLALGNVISALGDTRRATTKPKHIPYRDSKLTRMLQSSLGGNSKTLMIACVSPADSNFEETLNTLKYAYRARNIMNKPVVNIDPVTQQILTYKTQIQTLKELLEKCTCRDIGDINSILASIPTVSIPPAPPLSTPTLTNNNNNNSSSNNNNNSNNNKLNVGGNNSGFSRTPSSSSLPPTNSSKSSIVKMNNSRNISSSSSSSSSSSSSSSLTTTPSITNNTATPSPTSVIVTNLSKEKEKEIFDLGMKVSQLEFENNMLQDISNKITSKYKALANRSRQLEEISQNFINNFSPNKDQTYFNELFEQFNSVLNQPTISPITPMMAAVSTQISSSNVIINSNSLLPMAEDNLLPGGKLESINNNNNNNNNSSEGIELFENDSEELSDLNQYISEKEEELELISKTKQQYQQMKEQFDQKVKELQSQLEEVTVEKDQALKELDKDKDKDKDNKDKDQYYEDEKLRLTQHYEKKLNELKQQLDQHAGSNKKDYQRLLDLKRKSEEKIDSLQQDIKDTKRQKSDLLKKMRDELKKRDDAKQTQAKELDALKREARKTEVIIDQLKNQSKKKDLLLQKKTDESESYKKKLKEIEVHKQRVIQPINSKSIPSNNNNNNSSGSVKSSNGSTASSASSANSSSSSSSSSSTNTSTTSTSATNNTTTSTSTSTPTTEQLNRKLLHRKSINVPYWREWLIHQIQKNLEKNELTELLQREFKNKEIFVRQANDLKKAFTSVPSKLSKSEYNEQSQFLETNIKLQNEKILKSQKDLTIISNDCLDSPEILRMVSNTSFDKLPKLIQSSIELCIEYAEINRKNQQIKFINVPTPPTLQSQQQHQKSQHFYIQPPQPLQSQQQQQEKQQKQSNSEQVLEQRSSTSDLLEGIKLAISESNNKNNINNNNNNVNIAKSQPILPSQQQLSSSQELAEEYTSPSTSSLGMKLDQLLDEIKLDKEKREKNKLLNGYPPMSGINYFNPPTPQPLSASSFLTSAAATTTTTTTTTTTTNKQQVPKSFAPLNNTNNNNNNNNSSPLLLISDDKLDHSVFDKDLLDVDILGNDSSNNGFSVININSNNNITIKKPPSSPTRPHRKTTSLQSSPLSLSLESGLATALANNGNNNNNSNNNDVFTRLASQPRPDSRLKKYRDKLNTDDYLMAIKRNMNREDENFMRCNWTFNGHDGGLLTLVLDEQNPSTLYSGGSDKNIKLWDLHTGDNMLDLSSPGPVRSLCINGSSGCMFSGGAERTVKVWDIRSPGNTNLCIFKTPSDVNCLVTYGNYVVSGLENGTFKVWDIRHMQKPLKTPLTTTPHHTGTIFSMSVTSKYLVTGSRDHTINLFHRDSFVLAQKLQPPHHDGVTSIAVLDDVIYSGSRDRTIKRWDVSSINNLINNNGENNSNNLITTQLAQQTVPILSNTPSNSNLIINNNNNIINNNNNNNNSSNNNKSSSAPSSTTSSLSSSLDNSTFSLLNQYQQNRLLNNAHNDWVNCLCIHNGMIFSGGKDSNIKGWDPLLSSNSLLLGHESSISCLTSSKEFLFSGSTDKCIKIWKC.

A Kinesin motor domain is found at 13 to 413 (CVRVALRVRP…LKYAYRARNI (401 aa)). ATP is bound at residue 93-100 (GQTGSGKT). Disordered stretches follow at residues 231–302 (NSPV…DERN), 463–567 (VSIP…SPTS), 778–797 (LDKDKDKDKDNKDKDQYYED), 841–891 (KIDS…ARKT), 930–1008 (KQRV…TEQL), 1179–1207 (PQPLQSQQQQQEKQQKQSNSEQVLEQRSS), 1244–1267 (LPSQQQLSSSQELAEEYTSPSTSS), 1328–1360 (TTTTTTTTNKQQVPKSFAPLNNTNNNNNNNNSS), and 1403–1467 (NNIT…PRPD). Over residues 232–247 (SPVTSSSTSSTSTSSS) the composition is skewed to low complexity. Residues 280-297 (IDEDEEDDEEDEDDDIMS) are compositionally biased toward acidic residues. The span at 473 to 567 (TPTLTNNNNN…NNTATPSPTS (95 aa)) shows a compositional bias: low complexity. Residues 715-933 (FENDSEELSD…KEIEVHKQRV (219 aa)) are a coiled coil. Composition is skewed to low complexity over residues 937–1005 (INSK…TPTT), 1182–1200 (LQSQQQQQEKQQKQSNSEQ), 1244–1254 (LPSQQQLSSSQ), 1348–1358 (NNTNNNNNNNN), and 1423–1454 (SLQSSPLSLSLESGLATALANNGNNNNNSNNN). WD repeat units follow at residues 1506-1546 (GHDG…NMLD), 1548-1587 (SSPGPVRSLCINGSSGCMFSGGAERTVKVWDIRSPGNTNL), 1589-1628 (IFKTPSDVNCLVTYGNYVVSGLENGTFKVWDIRHMQKPLK), 1636-1673 (HHTGTIFSMSVTSKYLVTGSRDHTINLFHRDSFVLAQK), and 1677-1714 (PHHDGVTSIAVLDDVIYSGSRDRTIKRWDVSSINNLIN). The disordered stretch occupies residues 1758–1780 (NNNNNNSSNNNKSSSAPSSTTSS). WD repeat units follow at residues 1805–1842 (AHNDWVNCLCIHNGMIFSGGKDSNIKGWDPLLSSNSLL) and 1844–1873 (GHESSISCLTSSKEFLFSGSTDKCIKIWKC).

This sequence belongs to the TRAFAC class myosin-kinesin ATPase superfamily. Kinesin family.

The protein localises to the cytoplasm. The protein resides in the cytoskeleton. Functionally, microtubule-associated force-producing protein that plays a role in organelle transport. Its motor activity is directed toward the microtubule's plus end. Cooperates with kif10 and dynein to organize interphase microtubules. In Dictyostelium discoideum (Social amoeba), this protein is Kinesin-related protein 8 (kif8).